The following is a 269-amino-acid chain: Tryptophan synthase alpha chain (269 aa).

Active-site proton acceptor residues include glutamate 49 and aspartate 60.

The protein belongs to the TrpA family. As to quaternary structure, tetramer of two alpha and two beta chains.

The catalysed reaction is (1S,2R)-1-C-(indol-3-yl)glycerol 3-phosphate + L-serine = D-glyceraldehyde 3-phosphate + L-tryptophan + H2O. Its pathway is amino-acid biosynthesis; L-tryptophan biosynthesis; L-tryptophan from chorismate: step 5/5. Functionally, the alpha subunit is responsible for the aldol cleavage of indoleglycerol phosphate to indole and glyceraldehyde 3-phosphate. The protein is Tryptophan synthase alpha chain of Pseudomonas putida (Arthrobacter siderocapsulatus).